A 323-amino-acid chain; its full sequence is Glyoxylate/hydroxypyruvate reductase B (323 aa).

A disordered region spans residues Ala37–Glu62. Catalysis depends on residues Arg236 and Glu265. His284 (proton donor) is an active-site residue.

This sequence belongs to the D-isomer specific 2-hydroxyacid dehydrogenase family. GhrB subfamily. In terms of assembly, homodimer.

It localises to the cytoplasm. The enzyme catalyses glycolate + NADP(+) = glyoxylate + NADPH + H(+). It catalyses the reaction (R)-glycerate + NAD(+) = 3-hydroxypyruvate + NADH + H(+). It carries out the reaction (R)-glycerate + NADP(+) = 3-hydroxypyruvate + NADPH + H(+). Functionally, catalyzes the NADPH-dependent reduction of glyoxylate and hydroxypyruvate into glycolate and glycerate, respectively. The polypeptide is Glyoxylate/hydroxypyruvate reductase B (tkrA) (Enterobacter agglomerans (Erwinia herbicola)).